The following is a 374-amino-acid chain: Aminomethyltransferase (374 aa).

The protein belongs to the GcvT family. The glycine cleavage system is composed of four proteins: P, T, L and H.

It catalyses the reaction N(6)-[(R)-S(8)-aminomethyldihydrolipoyl]-L-lysyl-[protein] + (6S)-5,6,7,8-tetrahydrofolate = N(6)-[(R)-dihydrolipoyl]-L-lysyl-[protein] + (6R)-5,10-methylene-5,6,7,8-tetrahydrofolate + NH4(+). The glycine cleavage system catalyzes the degradation of glycine. This Prochlorococcus marinus (strain MIT 9303) protein is Aminomethyltransferase.